A 340-amino-acid polypeptide reads, in one-letter code: rRNA adenine N-6-methyltransferase (340 aa).

Positions 1–25 are enriched in low complexity; that stretch reads MAGPQDRPRGRGPSSGRPQRPVGGR. Residues 1–37 are disordered; the sequence is MAGPQDRPRGRGPSSGRPQRPVGGRSQRDRDRRVLGQ. 6 residues coordinate S-adenosyl-L-methionine: N38, L40, G65, E86, D111, and A127. Residues 284 to 340 are disordered; the sequence is RGGAARGPGDQRGRRGRPGGGPRPDGRAGGGPRRDAGGRRTGDGRGGRPRPPRGGQA. The segment covering 301-314 has biased composition (gly residues); that stretch reads PGGGPRPDGRAGGG. Residues 315 to 329 show a composition bias toward basic and acidic residues; that stretch reads PRRDAGGRRTGDGRG.

The protein belongs to the class I-like SAM-binding methyltransferase superfamily. rRNA adenine N(6)-methyltransferase family.

Involved in erythromycin resistance. The chain is rRNA adenine N-6-methyltransferase (ermA) from Aeromicrobium erythreum (strain ATCC 51598 / DSM 8599 / JCM 8359 / NBRC 15406 / NRRL B-3381).